The primary structure comprises 552 residues: MMVEDLVYRYALMNAVKHKGKANPGAVMGAVMSNEPELRKRAPEVKEAVQAAVEKVNSLKPEEQQSEMERLGLEIRERKQKKRQGLRNLPDVKGEVVLRFAPNPSGPLHIGHARAAILNHEYARRYDGKLILRIEDTDPRRVDPEAYDMIPSDLEWLGVEWDETIIQSDRMEIYYEYTERLIERGGAYVCTCTPEAFREFKNEGKACHCRDLGVRENLQRWREMFEMPEGSAVVRVKTDLQHPNPAIRDWVSMRIVEAEHPRTGTRYRVYPMMNFSVAVDDHLLGVTHVLRGKDHLANSEKQEYLYRHLGWEPPVFIHYGRLKMDDIALSTSGAREGIVEGKYSGWDDPRLGTIRAIARRGIRSDAIRKLMVEIGVKIADSTMSWKKIYGLNRNILEEEARRYFFAADPVRFEIEGLPGPIRVERSLHPDKPELGNRILELNGDVYLPRGDLREGPLRLIDAVNVIYSDGELRYHSEGIEEARELQAAMIHWVPAESALKAVVVMPDASEIEGVIEGDASELEVDDVVQLERFGFARVDSSGERLVFYYAHK.

A 'HIGH' region motif is present at residues 102 to 112 (PNPSGPLHIGH).

The protein belongs to the class-I aminoacyl-tRNA synthetase family. Glutamate--tRNA ligase type 2 subfamily.

The protein resides in the cytoplasm. The enzyme catalyses tRNA(Glu) + L-glutamate + ATP = L-glutamyl-tRNA(Glu) + AMP + diphosphate. In terms of biological role, catalyzes the attachment of glutamate to tRNA(Glu) in a two-step reaction: glutamate is first activated by ATP to form Glu-AMP and then transferred to the acceptor end of tRNA(Glu). The polypeptide is Glutamate--tRNA ligase (Methanothermobacter marburgensis (strain ATCC BAA-927 / DSM 2133 / JCM 14651 / NBRC 100331 / OCM 82 / Marburg) (Methanobacterium thermoautotrophicum)).